The sequence spans 454 residues: UPF0210 protein BAD_1323 (454 aa).

The protein belongs to the UPF0210 family. Homodimer.

The chain is UPF0210 protein BAD_1323 from Bifidobacterium adolescentis (strain ATCC 15703 / DSM 20083 / NCTC 11814 / E194a).